A 322-amino-acid chain; its full sequence is Zinc finger C2HC domain-containing protein CBG14627 (322 aa).

2 consecutive C2HC/C3H-type zinc fingers follow at residues 9-38 (PVYP…LATL) and 119-148 (DYVQ…QTTR). 8 residues coordinate Zn(2+): Cys-13, Cys-16, His-28, Cys-32, Cys-123, Cys-126, His-138, and Cys-142. Positions 144-322 (EQTTRKQGGK…SRNNSRSRIF (179 aa)) are disordered. Positions 148 to 168 (RKQGGKSSAGNRGLTSNNYRS) are enriched in polar residues. The segment covering 171–219 (SKHEGRKQESSSRNGSAERKTTTRGRDGSLSRARRDDSNDLTNRRKSLE) has biased composition (basic and acidic residues). Polar residues predominate over residues 220-238 (TRSQLTTGQANNRTTSLSA). The span at 278–294 (TTTTASASRSGSGSSSR) shows a compositional bias: low complexity. Residues 296 to 305 (RTRDESRESR) are compositionally biased toward basic and acidic residues. Over residues 311 to 322 (SNSRNNSRSRIF) the composition is skewed to low complexity.

The protein belongs to the ZC2HC1 family. It depends on Zn(2+) as a cofactor.

The protein is Zinc finger C2HC domain-containing protein CBG14627 of Caenorhabditis briggsae.